The sequence spans 688 residues: Polyribonucleotide nucleotidyltransferase (688 aa).

Residues Asp484 and Asp490 each contribute to the Mg(2+) site. In terms of domain architecture, KH spans 550-609 (PTTEIFNVAPDKIVEIIGQGGRVIKEIVEKFEVKIDLNKPSGEVKIMGNKERVLKTKEFI). Residues 626-688 (DEVLEAQVKR…NKGKIALDLA (63 aa)) form the S1 motif domain.

It belongs to the polyribonucleotide nucleotidyltransferase family. Mg(2+) is required as a cofactor.

The protein resides in the cytoplasm. It catalyses the reaction RNA(n+1) + phosphate = RNA(n) + a ribonucleoside 5'-diphosphate. Functionally, involved in mRNA degradation. Catalyzes the phosphorolysis of single-stranded polyribonucleotides processively in the 3'- to 5'-direction. The polypeptide is Polyribonucleotide nucleotidyltransferase (Helicobacter pylori (strain ATCC 700392 / 26695) (Campylobacter pylori)).